The primary structure comprises 964 residues: Translation initiation factor IF-2 (964 aa).

Residues 1–10 (MSDKTNDDKT) show a composition bias toward basic and acidic residues. The segment at 1–379 (MSDKTNDDKT…SQMQETREKI (379 aa)) is disordered. Positions 27–37 (EQSTVRQNFSH) are enriched in polar residues. The segment covering 77–102 (APAASTPAPAQAAQPAQAAPVVRAPA) has biased composition (low complexity). Over residues 103–113 (PATPAPKPAAP) the composition is skewed to pro residues. Residues 114–140 (AAPVTKPHVAQQRPAQQRPGGQQAQRP) show a composition bias toward low complexity. Composition is skewed to basic and acidic residues over residues 156–227 (SEMD…EAAK) and 234–243 (ARTERRDDAR). A compositionally biased stretch (low complexity) spans 250–278 (RPQQAGRPQGNRPPQGGRPQQGGPRPAAP). The segment covering 323-338 (PEVRAPKVVKTEDDRR) has biased composition (basic and acidic residues). Residues 462-629 (SRPPVVTIMG…AILLQAEILD (168 aa)) form the tr-type G domain. Residues 471–478 (GHVDHGKT) are G1. 471–478 (GHVDHGKT) is a GTP binding site. The G2 stretch occupies residues 496–500 (GITQH). Positions 517 to 520 (DTPG) are G3. GTP contacts are provided by residues 517 to 521 (DTPGH) and 571 to 574 (NKID). A G4 region spans residues 571–574 (NKID). The segment at 607-609 (SAK) is G5.

Belongs to the TRAFAC class translation factor GTPase superfamily. Classic translation factor GTPase family. IF-2 subfamily.

It localises to the cytoplasm. Its function is as follows. One of the essential components for the initiation of protein synthesis. Protects formylmethionyl-tRNA from spontaneous hydrolysis and promotes its binding to the 30S ribosomal subunits. Also involved in the hydrolysis of GTP during the formation of the 70S ribosomal complex. This chain is Translation initiation factor IF-2, found in Brucella anthropi (strain ATCC 49188 / DSM 6882 / CCUG 24695 / JCM 21032 / LMG 3331 / NBRC 15819 / NCTC 12168 / Alc 37) (Ochrobactrum anthropi).